The sequence spans 166 residues: Large ribosomal subunit protein uL10 (166 aa).

Belongs to the universal ribosomal protein uL10 family. Part of the ribosomal stalk of the 50S ribosomal subunit. The N-terminus interacts with L11 and the large rRNA to form the base of the stalk. The C-terminus forms an elongated spine to which L12 dimers bind in a sequential fashion forming a multimeric L10(L12)X complex.

In terms of biological role, forms part of the ribosomal stalk, playing a central role in the interaction of the ribosome with GTP-bound translation factors. This Shewanella woodyi (strain ATCC 51908 / MS32) protein is Large ribosomal subunit protein uL10.